The chain runs to 462 residues: Fumarate hydratase class II (462 aa).

Residues 97-99 (SGT), 128-131 (HPND), 138-140 (STN), and Thr186 contribute to the substrate site. His187 serves as the catalytic Proton donor/acceptor. Residue Ser317 is part of the active site. Residues Ser318 and 323 to 325 (KVN) each bind substrate.

This sequence belongs to the class-II fumarase/aspartase family. Fumarase subfamily. In terms of assembly, homotetramer.

It localises to the cytoplasm. The enzyme catalyses (S)-malate = fumarate + H2O. The protein operates within carbohydrate metabolism; tricarboxylic acid cycle; (S)-malate from fumarate: step 1/1. Its function is as follows. Involved in the TCA cycle. Catalyzes the stereospecific interconversion of fumarate to L-malate. The protein is Fumarate hydratase class II of Neisseria meningitidis serogroup A / serotype 4A (strain DSM 15465 / Z2491).